Consider the following 337-residue polypeptide: Glycerol-3-phosphate dehydrogenase [NAD(P)+] (337 aa).

NADPH contacts are provided by W11, R30, and K113. Sn-glycerol 3-phosphate-binding residues include K113, G141, and S143. A145 lines the NADPH pocket. Residues K196, D249, S259, R260, and N261 each contribute to the sn-glycerol 3-phosphate site. K196 functions as the Proton acceptor in the catalytic mechanism. NADPH is bound at residue R260. 2 residues coordinate NADPH: V284 and E286.

This sequence belongs to the NAD-dependent glycerol-3-phosphate dehydrogenase family.

Its subcellular location is the cytoplasm. The catalysed reaction is sn-glycerol 3-phosphate + NAD(+) = dihydroxyacetone phosphate + NADH + H(+). It catalyses the reaction sn-glycerol 3-phosphate + NADP(+) = dihydroxyacetone phosphate + NADPH + H(+). The protein operates within membrane lipid metabolism; glycerophospholipid metabolism. Functionally, catalyzes the reduction of the glycolytic intermediate dihydroxyacetone phosphate (DHAP) to sn-glycerol 3-phosphate (G3P), the key precursor for phospholipid synthesis. The chain is Glycerol-3-phosphate dehydrogenase [NAD(P)+] from Leptothrix cholodnii (strain ATCC 51168 / LMG 8142 / SP-6) (Leptothrix discophora (strain SP-6)).